Reading from the N-terminus, the 102-residue chain is Large ribosomal subunit protein bL21 (102 aa).

It belongs to the bacterial ribosomal protein bL21 family. As to quaternary structure, part of the 50S ribosomal subunit. Contacts protein L20.

Its function is as follows. This protein binds to 23S rRNA in the presence of protein L20. This is Large ribosomal subunit protein bL21 from Leifsonia xyli subsp. xyli (strain CTCB07).